Here is a 507-residue protein sequence, read N- to C-terminus: Histidine ammonia-lyase (507 aa).

The 5-imidazolinone (Ala-Gly) cross-link spans 140-142 (ASG). S141 is modified (2,3-didehydroalanine (Ser)).

This sequence belongs to the PAL/histidase family. Contains an active site 4-methylidene-imidazol-5-one (MIO), which is formed autocatalytically by cyclization and dehydration of residues Ala-Ser-Gly.

The protein resides in the cytoplasm. The enzyme catalyses L-histidine = trans-urocanate + NH4(+). The protein operates within amino-acid degradation; L-histidine degradation into L-glutamate; N-formimidoyl-L-glutamate from L-histidine: step 1/3. The sequence is that of Histidine ammonia-lyase from Yersinia enterocolitica serotype O:8 / biotype 1B (strain NCTC 13174 / 8081).